Consider the following 830-residue polypeptide: Cyclin-dependent kinase inhibitor FAR1 (830 aa).

Positions 1 to 31 (MKTPTRVSFEKKIHTPPSGDRDAERSPPKKF) are disordered. Residues 8–27 (SFEKKIHTPPSGDRDAERSP) are compositionally biased toward basic and acidic residues. S87 carries the phosphoserine; by CDC28 modification. S110 and S114 each carry phosphoserine. The RING-type zinc-finger motif lies at 202–252 (CLICEESISSTFTGEKVVESTCSHTSHYNCYLMLFETLYFQGKFPECKICG). At T306 the chain carries Phosphothreonine.

Associates with the CDC28-CLN complex. Post-translationally, thought to be phosphorylated by MAP kinase FUS3. Thought to enhance the binding of FAR1 to G1-specific cyclin-dependent kinase (CDK) complexes.

Its function is as follows. Inhibitor of the cyclin-dependent kinase CDC28. Necessary for cell cycle arrest. Involved in pheromone response. Contributes to mating efficiency. Required for oriented polarization of yeast cells in response to mating pheromones. The chain is Cyclin-dependent kinase inhibitor FAR1 (FAR1) from Saccharomyces cerevisiae (strain ATCC 204508 / S288c) (Baker's yeast).